A 96-amino-acid polypeptide reads, in one-letter code: Signal recognition particle 19 kDa protein (96 aa).

The protein belongs to the SRP19 family. In terms of assembly, part of the signal recognition particle protein translocation system, which is composed of SRP and FtsY. Archaeal SRP consists of a 7S RNA molecule of 300 nucleotides and two protein subunits: SRP54 and SRP19.

The protein localises to the cytoplasm. In terms of biological role, involved in targeting and insertion of nascent membrane proteins into the cytoplasmic membrane. Binds directly to 7S RNA and mediates binding of the 54 kDa subunit of the SRP. The sequence is that of Signal recognition particle 19 kDa protein from Pyrobaculum arsenaticum (strain DSM 13514 / JCM 11321 / PZ6).